A 298-amino-acid chain; its full sequence is UDP-3-O-acyl-N-acetylglucosamine deacetylase (298 aa).

Residues His80, His239, and Asp243 each coordinate Zn(2+). Catalysis depends on His266, which acts as the Proton donor.

It belongs to the LpxC family. The cofactor is Zn(2+).

It carries out the reaction a UDP-3-O-[(3R)-3-hydroxyacyl]-N-acetyl-alpha-D-glucosamine + H2O = a UDP-3-O-[(3R)-3-hydroxyacyl]-alpha-D-glucosamine + acetate. The protein operates within glycolipid biosynthesis; lipid IV(A) biosynthesis; lipid IV(A) from (3R)-3-hydroxytetradecanoyl-[acyl-carrier-protein] and UDP-N-acetyl-alpha-D-glucosamine: step 2/6. Functionally, catalyzes the hydrolysis of UDP-3-O-myristoyl-N-acetylglucosamine to form UDP-3-O-myristoylglucosamine and acetate, the committed step in lipid A biosynthesis. The protein is UDP-3-O-acyl-N-acetylglucosamine deacetylase of Blochmanniella floridana.